The chain runs to 305 residues: Ribosomal protein L11 methyltransferase (305 aa).

S-adenosyl-L-methionine is bound by residues Thr-149, Gly-176, Asp-198, and Asn-240.

The protein belongs to the methyltransferase superfamily. PrmA family.

Its subcellular location is the cytoplasm. The catalysed reaction is L-lysyl-[protein] + 3 S-adenosyl-L-methionine = N(6),N(6),N(6)-trimethyl-L-lysyl-[protein] + 3 S-adenosyl-L-homocysteine + 3 H(+). Functionally, methylates ribosomal protein L11. In Trichlorobacter lovleyi (strain ATCC BAA-1151 / DSM 17278 / SZ) (Geobacter lovleyi), this protein is Ribosomal protein L11 methyltransferase.